A 319-amino-acid polypeptide reads, in one-letter code: MATVKISLSLASLSPSSSSSSIQSKLSPSFIPNAAPAKAVKLRFNGKSLRAKPMVYRSSRSVGVTCSASSSLTTLPSALLFDCDGVLVDTEKDGHRISFNDTFKERDLNVTWDVDLYGELLKIGGGKERMTAYFNKVGWPEKAPKDEAERKEFIAGLHKQKTELFMVLIEKKLLPLRPGVAKLVDQALTNGVKVAVCSTSNEKAVSAIVSCLLGPERAEKIKIFAGDVVPKKKPDPAIYNLAAETLGVDPSKCVVVEDSAIGLAAAKAAGMTCIVTKSGYTADEDFENADAVFDCIGDPPEERFDLAFCGSLLRKQFVS.

A chloroplast-targeting transit peptide spans methionine 1 to threonine 65. Aspartate 82 acts as the Nucleophile in catalysis. Mg(2+)-binding residues include aspartate 82 and aspartate 84. A substrate-binding site is contributed by aspartate 82. Residue aspartate 84 is the Proton donor of the active site. Substrate is bound by residues glutamate 91, glycine 125 to arginine 129, histidine 158 to lysine 161, and serine 198 to alanine 204. Aspartate 258 contacts Mg(2+).

The protein belongs to the HAD-like hydrolase superfamily. DOG/GPP family. Requires Mg(2+) as cofactor.

It localises to the plastid. The protein localises to the chloroplast. The catalysed reaction is D-xylulose 1,5-bisphosphate + H2O = D-xylulose 5-phosphate + phosphate. In terms of biological role, highly selective xylulose-1,5-bisphosphate (XuBP) phosphatase. Also shows activity towards ribulose-1,5-bisphosphate (RuBP) and fructose-1,6-bisphosphate (FBP), but not towards fructose-6-phosphate (F6P) or ribulose-5-phosphate (Ru5P). Degrades xylulose-1,5-bisphosphate, a potent inhibitor of rubisco produced by the rubisco itself. The polypeptide is CBBY-like protein (Arabidopsis thaliana (Mouse-ear cress)).